The following is a 417-amino-acid chain: Methyltransferase/ribosomally synthesized cyclic peptide dendrothelin A precursor dbihMA (417 aa).

The methyltransferase domain stretch occupies residues 1–251 (MESSTQTKPG…GVSTFYIPPK (251 aa)). Catalysis depends on residues Arg72, Tyr76, and Tyr98. S-adenosyl-L-methionine is bound by residues Tyr98, His100, Val103, Ala130, Gln172, Ala213, Ser244, and Thr245. Positions 252 to 378 (ARKDINTDII…WAIRCAMKNM (127 aa)) are clasp domain. Residues 379–399 (PSSLLEAASQSVEEASMNGFP) form a precursor leader region. Residues Val401 and Val403 each carry the N-methylvaline modification. N-methylthreonine is present on Thr404. Gly405 carries the N-methylglycine modification. Position 406 is an N-methylisoleucine (Ile406). Val407 bears the N-methylvaline mark. Gly408 is subject to N-methylglycine. Ile410 bears the N-methylisoleucine mark. At Gly411 the chain carries N-methylglycine. At Val413 the chain carries N-methylvaline.

It in the N-terminal section; belongs to the precorrin methyltransferase family. In terms of assembly, homodimer. In terms of processing, dbiMA automethylates at Val-401, Val-403, Thr-404, Gly-405, Ile-406, Val-407, Gly-408, Ile-410, Gly-411 and Val-413 before being processed by the prolyloligopeptidase dbiP which likely forms a peptidyl ester upon removal of the follower propeptide, which then undergoes macrocyclization with the N-terminus of the modified core peptide. Peptide backbone alpha-N-methylations change the physicochemical properties of amide bonds to provide structural constraints and other favorable characteristics including biological membrane permeability to peptides.

Its pathway is mycotoxin biosynthesis. In terms of biological role, fusion protein of the methyltransferase dbiM and the dendrothelin core peptide; part of the gene cluster that mediates the biosynthesis of dendrothelin A, a highly methylated cyclic dodecapeptide showing slight nematodicidal activity. Dendrothelin A derives from the C-terminus of the dbiMA protein, and it is the dbiMA protein that methylates its own C-terminus using S-adenosyl methionine (SAM). The C-terminus is subsequently cleaved off and macrocyclized by the prolyloligopeptidase dbiP to give the final product. In Dendrothele bispora (strain CBS 962.96), this protein is Methyltransferase/ribosomally synthesized cyclic peptide dendrothelin A precursor dbihMA.